A 537-amino-acid polypeptide reads, in one-letter code: Small conductance calcium-activated potassium channel protein 1 (537 aa).

Positions 1-10 are enriched in polar residues; sequence MSSHSHNGSV. The tract at residues 1–90 is disordered; that stretch reads MSSHSHNGSV…GKPPTVSHRL (90 aa). Residues 65–76 are compositionally biased toward acidic residues; that stretch reads QEEEEEEEEEED. A helical transmembrane segment spans residues 108–128; it reads LIFGMFGIVVMVTETELSWGV. A helical membrane pass occupies residues 137 to 157; it reads FALKCLISLSTVILLGLVILY. A helical membrane pass occupies residues 176–196; that stretch reads IAMTWERVSLISLELVVCAIH. A helical transmembrane segment spans residues 225 to 245; the sequence is VLLSIPMFLRLYLLARVMLLH. Residues 274 to 294 traverse the membrane as a helical segment; that stretch reads LMTICPGTVLLVFSVSSWIVA. The pore-forming intramembrane region spans 314 to 334; the sequence is FLGAMWLISITFLSIGYGDMV. The segment at 343–363 is segment S6; sequence VCLLTGIMGAGCTALVVAVVA. Residues 381 to 460 are calmodulin-binding; the sequence is DTQLTKRVKN…LAELAKAQSI (80 aa).

It belongs to the potassium channel KCNN family. KCa2.1/KCNN1 subfamily. In terms of assembly, homodimer. Heteromultimer with KCNN2 and KCNN3. The complex is composed of 4 channel subunits each of which binds to a calmodulin subunit which regulates the channel activity through calcium-binding. Interacts with calmodulin. Highest expression in brain and liver with lower levels in heart, testis, kidney and colon. In colon, detected in smooth muscle cells. Expressed in atrial and ventricular myocytes with higher levels in atrial myocytes.

The protein resides in the membrane. The protein localises to the cytoplasm. It localises to the myofibril. Its subcellular location is the sarcomere. It is found in the z line. The enzyme catalyses K(+)(in) = K(+)(out). With respect to regulation, inhibited by bee venom neurotoxin apamin. Inhibited by d-tubocurarine and tetraethylammonium (TEA). In terms of biological role, small conductance calcium-activated potassium channel that mediates the voltage-independent transmembrane transfer of potassium across the cell membrane through a constitutive interaction with calmodulin which binds the intracellular calcium allowing its opening. The current is characterized by a voltage-independent activation, an intracellular calcium concentration increase-dependent activation and a single-channel conductance of about 3 picosiemens. Also presents an inwardly rectifying current, thus reducing its already small outward conductance of potassium ions, which is particularly the case when the membrane potential displays positive values, above + 20 mV. Activation is followed by membrane hyperpolarization. Thought to regulate neuronal excitability by contributing to the slow component of synaptic afterhyperpolarization. The chain is Small conductance calcium-activated potassium channel protein 1 from Mus musculus (Mouse).